Reading from the N-terminus, the 202-residue chain is Vitelline membrane outer layer protein 1 homolog (202 aa).

A signal peptide spans 1-24 (MERGAGAKLLPLLLLLRATGFTCA). 4 disulfide bridges follow: C53-C86, C114-C146, C169-C199, and C174-C200.

Belongs to the VMO1 family.

It localises to the secreted. The chain is Vitelline membrane outer layer protein 1 homolog (VMO1) from Homo sapiens (Human).